The chain runs to 158 residues: Fluoride-specific ion channel FluC 2 (158 aa).

4 consecutive transmembrane segments (helical) span residues 25 to 45 (AWHG…IGGT), 63 to 83 (WTTF…MVVI), 95 to 115 (PFFG…AVDI), and 126 to 146 (TALA…RLAA). The Na(+) site is built by Gly103 and Thr106.

It belongs to the fluoride channel Fluc/FEX (TC 1.A.43) family.

It is found in the cell membrane. It catalyses the reaction fluoride(in) = fluoride(out). Its activity is regulated as follows. Na(+) is not transported, but it plays an essential structural role and its presence is essential for fluoride channel function. Its function is as follows. Fluoride-specific ion channel. Important for reducing fluoride concentration in the cell, thus reducing its toxicity. The polypeptide is Fluoride-specific ion channel FluC 2 (Streptomyces avermitilis (strain ATCC 31267 / DSM 46492 / JCM 5070 / NBRC 14893 / NCIMB 12804 / NRRL 8165 / MA-4680)).